The primary structure comprises 424 residues: Histidine--tRNA ligase (424 aa).

Belongs to the class-II aminoacyl-tRNA synthetase family. In terms of assembly, homodimer.

The protein resides in the cytoplasm. It carries out the reaction tRNA(His) + L-histidine + ATP = L-histidyl-tRNA(His) + AMP + diphosphate + H(+). This Pediococcus pentosaceus (strain ATCC 25745 / CCUG 21536 / LMG 10740 / 183-1w) protein is Histidine--tRNA ligase.